The chain runs to 432 residues: Putative D-alanyl-D-alanine carboxypeptidase (432 aa).

Residues 7–25 (ATVLLTFSLSAFAVEYPVL) traverse the membrane as a helical; Signal-anchor segment.

This sequence belongs to the peptidase S12 family. YfeW subfamily.

It is found in the cell inner membrane. It carries out the reaction Preferential cleavage: (Ac)2-L-Lys-D-Ala-|-D-Ala. Also transpeptidation of peptidyl-alanyl moieties that are N-acyl substituents of D-alanine.. The sequence is that of Putative D-alanyl-D-alanine carboxypeptidase from Salmonella enteritidis PT4 (strain P125109).